The primary structure comprises 189 residues: NADH-quinone oxidoreductase subunit B (189 aa).

The [4Fe-4S] cluster site is built by Cys39, Cys40, Cys104, and Cys135.

This sequence belongs to the complex I 20 kDa subunit family. In terms of assembly, NDH-1 is composed of 14 different subunits. Subunits NuoB, C, D, E, F, and G constitute the peripheral sector of the complex. Requires [4Fe-4S] cluster as cofactor.

It localises to the cell inner membrane. The enzyme catalyses a quinone + NADH + 5 H(+)(in) = a quinol + NAD(+) + 4 H(+)(out). Functionally, NDH-1 shuttles electrons from NADH, via FMN and iron-sulfur (Fe-S) centers, to quinones in the respiratory chain. The immediate electron acceptor for the enzyme in this species is believed to be a menaquinone. Couples the redox reaction to proton translocation (for every two electrons transferred, four hydrogen ions are translocated across the cytoplasmic membrane), and thus conserves the redox energy in a proton gradient. The protein is NADH-quinone oxidoreductase subunit B of Chlorobaculum parvum (strain DSM 263 / NCIMB 8327) (Chlorobium vibrioforme subsp. thiosulfatophilum).